We begin with the raw amino-acid sequence, 571 residues long: uncharacterized protein (571 aa).

Helical transmembrane passes span 5–27 (VILN…GYLV), 34–56 (TFVL…LNIT), 61–79 (IGSL…QGGA), 92–114 (LLAS…AWIF), 161–183 (TVGY…ATIF), 391–408 (FIFF…GLIS), 412–434 (FGIS…FGWI), 455–474 (LGLA…QAIT), 484–506 (FFLG…YYLL), 513–532 (VLLA…AALL), and 547–569 (SYAL…VTII).

The protein belongs to the AAE transporter (TC 2.A.81) family.

The protein localises to the cell membrane. This is an uncharacterized protein from Francisella tularensis subsp. tularensis (strain SCHU S4 / Schu 4).